Reading from the N-terminus, the 105-residue chain is Urease subunit beta (105 aa).

This sequence belongs to the urease beta subunit family. Heterotrimer of UreA (gamma), UreB (beta) and UreC (alpha) subunits. Three heterotrimers associate to form the active enzyme.

The protein resides in the cytoplasm. The enzyme catalyses urea + 2 H2O + H(+) = hydrogencarbonate + 2 NH4(+). It functions in the pathway nitrogen metabolism; urea degradation; CO(2) and NH(3) from urea (urease route): step 1/1. The protein is Urease subunit beta of Shewanella halifaxensis (strain HAW-EB4).